Consider the following 199-residue polypeptide: NAD(P)H dehydrogenase (quinone) (199 aa).

In terms of domain architecture, Flavodoxin-like spans 4-190 (VLVLYYSTYG…EGARHQGELI (187 aa)). FMN contacts are provided by residues 10–15 (STYGHV) and 78–80 (TRF). Residue Y12 participates in NAD(+) binding. W98 is a substrate binding site. Residues 113–119 (STATQHG) and H134 contribute to the FMN site.

It belongs to the WrbA family. It depends on FMN as a cofactor.

It catalyses the reaction a quinone + NADH + H(+) = a quinol + NAD(+). It carries out the reaction a quinone + NADPH + H(+) = a quinol + NADP(+). The protein is NAD(P)H dehydrogenase (quinone) of Cupriavidus metallidurans (strain ATCC 43123 / DSM 2839 / NBRC 102507 / CH34) (Ralstonia metallidurans).